The sequence spans 245 residues: tRNA1(Val) (adenine(37)-N6)-methyltransferase (245 aa).

This sequence belongs to the methyltransferase superfamily. tRNA (adenine-N(6)-)-methyltransferase family.

It is found in the cytoplasm. The catalysed reaction is adenosine(37) in tRNA1(Val) + S-adenosyl-L-methionine = N(6)-methyladenosine(37) in tRNA1(Val) + S-adenosyl-L-homocysteine + H(+). Functionally, specifically methylates the adenine in position 37 of tRNA(1)(Val) (anticodon cmo5UAC). This is tRNA1(Val) (adenine(37)-N6)-methyltransferase from Klebsiella pneumoniae (strain 342).